A 287-amino-acid chain; its full sequence is ATP synthase gamma chain (287 aa).

Belongs to the ATPase gamma chain family. In terms of assembly, F-type ATPases have 2 components, CF(1) - the catalytic core - and CF(0) - the membrane proton channel. CF(1) has five subunits: alpha(3), beta(3), gamma(1), delta(1), epsilon(1). CF(0) has three main subunits: a, b and c.

Its subcellular location is the cell inner membrane. In terms of biological role, produces ATP from ADP in the presence of a proton gradient across the membrane. The gamma chain is believed to be important in regulating ATPase activity and the flow of protons through the CF(0) complex. The sequence is that of ATP synthase gamma chain from Pectobacterium carotovorum subsp. carotovorum (strain PC1).